A 142-amino-acid chain; its full sequence is Ribosome maturation factor RimP (142 aa).

It belongs to the RimP family.

It localises to the cytoplasm. Functionally, required for maturation of 30S ribosomal subunits. This Sulfurovum sp. (strain NBC37-1) protein is Ribosome maturation factor RimP.